The chain runs to 546 residues: Probable bifunctional SAT/APS kinase (546 aa).

The tract at residues 1–370 is sulfate adenylyltransferase; that stretch reads MEKIKYLKSI…LAETYVPKHK (370 aa). The adenylsulfate kinase stretch occupies residues 371-546; sequence QGFCVWLTGL…FLKKEGFIKD (176 aa). 379–386 is a binding site for ATP; sequence GLPCAGKS. Residue Ser453 is the Phosphoserine intermediate of the active site.

In the N-terminal section; belongs to the sulfate adenylyltransferase family. It in the C-terminal section; belongs to the APS kinase family.

It carries out the reaction sulfate + ATP + H(+) = adenosine 5'-phosphosulfate + diphosphate. The enzyme catalyses adenosine 5'-phosphosulfate + ATP = 3'-phosphoadenylyl sulfate + ADP + H(+). It functions in the pathway sulfur metabolism; hydrogen sulfide biosynthesis; sulfite from sulfate: step 1/3. The protein operates within sulfur metabolism; hydrogen sulfide biosynthesis; sulfite from sulfate: step 2/3. The chain is Probable bifunctional SAT/APS kinase (sat/cysC) from Aquifex aeolicus (strain VF5).